The chain runs to 658 residues: UvrABC system protein B (658 aa).

Positions 25–178 (KSLKNNNHYQ…KNFLLKLVEM (154 aa)) constitute a Helicase ATP-binding domain. Residue 38 to 45 (GVTGSGKT) coordinates ATP. The Beta-hairpin signature appears at 91–114 (HFDYYQPESYIPRRDLFIEKDSSI). The Helicase C-terminal domain maps to 433–607 (QVQDLFDEIK…ELKLRDDEIR (175 aa)). Residues 623–658 (EKIIKELDKKMRECAKNLDFEEAMRLRDEIAKLRTL) form the UVR domain.

The protein belongs to the UvrB family. As to quaternary structure, forms a heterotetramer with UvrA during the search for lesions. Interacts with UvrC in an incision complex.

It is found in the cytoplasm. The UvrABC repair system catalyzes the recognition and processing of DNA lesions. A damage recognition complex composed of 2 UvrA and 2 UvrB subunits scans DNA for abnormalities. Upon binding of the UvrA(2)B(2) complex to a putative damaged site, the DNA wraps around one UvrB monomer. DNA wrap is dependent on ATP binding by UvrB and probably causes local melting of the DNA helix, facilitating insertion of UvrB beta-hairpin between the DNA strands. Then UvrB probes one DNA strand for the presence of a lesion. If a lesion is found the UvrA subunits dissociate and the UvrB-DNA preincision complex is formed. This complex is subsequently bound by UvrC and the second UvrB is released. If no lesion is found, the DNA wraps around the other UvrB subunit that will check the other stand for damage. This chain is UvrABC system protein B, found in Helicobacter pylori (strain HPAG1).